Here is a 378-residue protein sequence, read N- to C-terminus: 8-demethyl-8-alpha-L-rhamnosyl tetracenomycin-C 2'-O-methyltransferase (378 aa).

Residues Glu-195–Tyr-201, Ser-210, Asp-227, Asp-245–Gln-246, and Asp-268 each bind S-adenosyl-L-methionine. Asp-268 serves as a coordination point for Mg(2+). The active-site Proton acceptor is the His-271. Glu-296 and Asp-297 together coordinate Mg(2+).

It belongs to the methyltransferase OleY/MycE family. It depends on Mg(2+) as a cofactor.

It carries out the reaction 8-demethyl-8-alpha-L-rhamnosyl-tetracenomycin C + S-adenosyl-L-methionine = 8-demethyl-8-(2-O-methyl-alpha-L-rhamnosyl)-tetracenomycin C + S-adenosyl-L-homocysteine + H(+). Its pathway is antibiotic biosynthesis. In terms of biological role, O-methyltransferase involved in the biosynthesis of the permethylated L-rhamnose moiety of elloramycin, an antitumor polyketide. Mediates the methylation of the hydroxy groups at the 2'-position after the sugar moiety has been attached to the aglycon. In Streptomyces olivaceus, this protein is 8-demethyl-8-alpha-L-rhamnosyl tetracenomycin-C 2'-O-methyltransferase.